A 521-amino-acid polypeptide reads, in one-letter code: Protein NRT1/ PTR FAMILY 4.2 (521 aa).

12 helical membrane-spanning segments follow: residues Ile-30–Val-50, Ala-65–Ile-85, Phe-89–Leu-109, Ala-133–Leu-153, Phe-172–Leu-192, Phe-204–Phe-224, Phe-297–Leu-317, Ile-338–Tyr-358, Ile-381–Lys-401, Ile-413–Leu-433, Ile-451–Val-471, and Leu-498–Ala-518.

This sequence belongs to the major facilitator superfamily. Proton-dependent oligopeptide transporter (POT/PTR) (TC 2.A.17) family. Expressed in siliques.

The protein localises to the membrane. Its function is as follows. Involved in abscisic acid transport. In Arabidopsis thaliana (Mouse-ear cress), this protein is Protein NRT1/ PTR FAMILY 4.2 (NPF4.2).